The primary structure comprises 371 residues: tRNA-specific 2-thiouridylase MnmA (371 aa).

Residues 16–23 (GMSGGVDS) and methionine 42 contribute to the ATP site. Positions 102-104 (NPD) are interaction with target base in tRNA. The active-site Nucleophile is the cysteine 107. Cysteines 107 and 204 form a disulfide. Glycine 132 is an ATP binding site. Residues 154–156 (KDQ) are interaction with tRNA. Catalysis depends on cysteine 204, which acts as the Cysteine persulfide intermediate. The segment at 316-317 (RY) is interaction with tRNA.

Belongs to the MnmA/TRMU family.

It is found in the cytoplasm. The enzyme catalyses S-sulfanyl-L-cysteinyl-[protein] + uridine(34) in tRNA + AH2 + ATP = 2-thiouridine(34) in tRNA + L-cysteinyl-[protein] + A + AMP + diphosphate + H(+). Its function is as follows. Catalyzes the 2-thiolation of uridine at the wobble position (U34) of tRNA, leading to the formation of s(2)U34. This is tRNA-specific 2-thiouridylase MnmA from Shewanella piezotolerans (strain WP3 / JCM 13877).